The sequence spans 256 residues: 6-phosphogluconolactonase (256 aa).

It belongs to the glucosamine/galactosamine-6-phosphate isomerase family. 6-phosphogluconolactonase subfamily.

The enzyme catalyses 6-phospho-D-glucono-1,5-lactone + H2O = 6-phospho-D-gluconate + H(+). It functions in the pathway carbohydrate degradation; pentose phosphate pathway; D-ribulose 5-phosphate from D-glucose 6-phosphate (oxidative stage): step 2/3. Its function is as follows. Hydrolysis of 6-phosphogluconolactone to 6-phosphogluconate. The protein is 6-phosphogluconolactonase (pgl) of Chlamydia muridarum (strain MoPn / Nigg).